We begin with the raw amino-acid sequence, 179 residues long: ATP synthase subunit delta (179 aa).

The protein belongs to the ATPase delta chain family. F-type ATPases have 2 components, F(1) - the catalytic core - and F(0) - the membrane proton channel. F(1) has five subunits: alpha(3), beta(3), gamma(1), delta(1), epsilon(1). F(0) has three main subunits: a(1), b(2) and c(10-14). The alpha and beta chains form an alternating ring which encloses part of the gamma chain. F(1) is attached to F(0) by a central stalk formed by the gamma and epsilon chains, while a peripheral stalk is formed by the delta and b chains.

It localises to the cell inner membrane. Its function is as follows. F(1)F(0) ATP synthase produces ATP from ADP in the presence of a proton or sodium gradient. F-type ATPases consist of two structural domains, F(1) containing the extramembraneous catalytic core and F(0) containing the membrane proton channel, linked together by a central stalk and a peripheral stalk. During catalysis, ATP synthesis in the catalytic domain of F(1) is coupled via a rotary mechanism of the central stalk subunits to proton translocation. This protein is part of the stalk that links CF(0) to CF(1). It either transmits conformational changes from CF(0) to CF(1) or is implicated in proton conduction. The polypeptide is ATP synthase subunit delta (Thermosipho melanesiensis (strain DSM 12029 / CIP 104789 / BI429)).